A 311-amino-acid polypeptide reads, in one-letter code: MTKIIFMGTPDFSTTVLEMLIAEHDVIAVVTQPDRPVGRKRVMTPPPVKKVAMKYDLPVYQPEKLSGSEELEQLLQLDVDLIVTAAFGQLLPESLLALPNLGAINVHASLLPKYRGGAPIHQAIIDGEQETGITIMYMVKKLDAGNIISQQAIKIEENDNVGTMHDKLSVLGADLLKETLPSIIEGTNESVPQDDTQATFASNIRREDERISWNKPGRQVFNQIRGLSPWPVAYTTMDDTNLKIYDAELVETNKINEPGTIIETTKKAIIVATNDNEAVAIKDMQLAGKKRMLAANYLSGAQNTLVGKKLI.

109 to 112 (SLLP) serves as a coordination point for (6S)-5,6,7,8-tetrahydrofolate.

Belongs to the Fmt family.

It catalyses the reaction L-methionyl-tRNA(fMet) + (6R)-10-formyltetrahydrofolate = N-formyl-L-methionyl-tRNA(fMet) + (6S)-5,6,7,8-tetrahydrofolate + H(+). Functionally, attaches a formyl group to the free amino group of methionyl-tRNA(fMet). The formyl group appears to play a dual role in the initiator identity of N-formylmethionyl-tRNA by promoting its recognition by IF2 and preventing the misappropriation of this tRNA by the elongation apparatus. This is Methionyl-tRNA formyltransferase from Staphylococcus aureus (strain USA300).